Consider the following 322-residue polypeptide: Ribosome biogenesis protein RLP7 (322 aa).

Positions 1–16 are enriched in polar residues; sequence MSSTQDSKAQTLNSNP. Residues 1–52 are disordered; sequence MSSTQDSKAQTLNSNPEILLRKRRNADRTRIERQELAKKKREEQIKKKRSNK. Serine 2 carries the post-translational modification N-acetylserine. Serine 14 bears the Phosphoserine mark. Residues 26–45 are compositionally biased toward basic and acidic residues; that stretch reads ADRTRIERQELAKKKREEQI. At threonine 120 the chain carries Phosphothreonine. At serine 278 the chain carries Phosphoserine.

It belongs to the universal ribosomal protein uL30 family.

The protein localises to the nucleus. It localises to the nucleolus. Involved in the biogenesis of the 60S ribosomal subunit. May act as a specificity factor that binds precursor rRNAs and tethers the enzymes that carry out the early 5' to 3' exonucleolytic reactions that generate the mature rRNAs. The polypeptide is Ribosome biogenesis protein RLP7 (RLP7) (Saccharomyces cerevisiae (strain ATCC 204508 / S288c) (Baker's yeast)).